A 159-amino-acid polypeptide reads, in one-letter code: Ribosomal RNA large subunit methyltransferase H (159 aa).

S-adenosyl-L-methionine-binding positions include Leu76, Gly108, and 127–132 (FSKMTF).

It belongs to the RNA methyltransferase RlmH family. Homodimer.

The protein resides in the cytoplasm. It carries out the reaction pseudouridine(1915) in 23S rRNA + S-adenosyl-L-methionine = N(3)-methylpseudouridine(1915) in 23S rRNA + S-adenosyl-L-homocysteine + H(+). Functionally, specifically methylates the pseudouridine at position 1915 (m3Psi1915) in 23S rRNA. The polypeptide is Ribosomal RNA large subunit methyltransferase H (Staphylococcus carnosus (strain TM300)).